Consider the following 503-residue polypeptide: 2-isopropylmalate synthase (503 aa).

Residues D1, H189, H191, and N225 each coordinate Mn(2+). The Pyruvate carboxyltransferase domain occupies 1-254 (DGEQALQASL…STNINHKEIY (254 aa)). A regulatory domain region spans residues 379–503 (SLKFFSVQSI…NKNLKNLKKQ (125 aa)).

This sequence belongs to the alpha-IPM synthase/homocitrate synthase family. LeuA type 1 subfamily. Homodimer. It depends on Mn(2+) as a cofactor.

It is found in the cytoplasm. The enzyme catalyses 3-methyl-2-oxobutanoate + acetyl-CoA + H2O = (2S)-2-isopropylmalate + CoA + H(+). Its pathway is amino-acid biosynthesis; L-leucine biosynthesis; L-leucine from 3-methyl-2-oxobutanoate: step 1/4. Catalyzes the condensation of the acetyl group of acetyl-CoA with 3-methyl-2-oxobutanoate (2-ketoisovalerate) to form 3-carboxy-3-hydroxy-4-methylpentanoate (2-isopropylmalate). The sequence is that of 2-isopropylmalate synthase from Buchnera aphidicola subsp. Uroleucon ambrosiae.